Consider the following 477-residue polypeptide: Homeobox protein Meis2 (477 aa).

The required for interaction with PBX1 stretch occupies residues D71–E191. The 84-residue stretch at G110 to D193 folds into the MEIS N-terminal domain. A compositionally biased stretch (basic and acidic residues) spans D193–L203. The tract at residues D193 to F283 is disordered. Polar residues-rich tracts occupy residues S204–S217 and G239–Q251. A DNA-binding region (homeobox; TALE-type) is located at residues R276–M338. Residues L299–R333 form an interaction with DNA region. Residues D340–Q477 form a transcriptional activation domain region.

This sequence belongs to the TALE/MEIS homeobox family. As to quaternary structure, monomer and homodimer. Heterodimer with HOXB13. Isoform Meis2A interacts with TLX1. Isoform Meis2B interacts with HOXA13 and PBX1 isoform PBX1b. Isoform Meis2D interacts with SP1, SP3 and KLF4. Isoform Meis2D interacts with PBX1 isoform PBX1a; the interaction partially relieves MEIS2 autoinhibition. Isoform Meis2B is part of a PDX1:PBX1b:MEIS2b complex; Meis2B is recruited by PBX1b and can be replaced by isoform Meis2D in a small fraction of complexes. Can form trimeric complexes including HOXB8 and PBX2 or PBX3. Displays spatially restricted expression patterns in the developing nervous system, limbs, face, and in various viscera. In adult, it is mainly expressed in the brain and female genital tract, with a different distribution of the alternative splice forms in these organs. Lower expression in lung and only basal level in heart, liver, kidney, spleen, and testis. Expressed in pancreatic islets (beta-cells only).

Its subcellular location is the nucleus. The protein resides in the cytoplasm. It is found in the perinuclear region. Involved in transcriptional regulation. Binds to HOX or PBX proteins to form dimers, or to a DNA-bound dimer of PBX and HOX proteins and thought to have a role in stabilization of the homeoprotein-DNA complex. Isoform Meis2B is required for the activity of a PDX1:PBX1b:MEIS2b complex in pancreatic acinar cells involved in the transcriptional activation of the ELA1 enhancer; the complex binds to the enhancer B element and cooperates with the transcription factor 1 complex (PTF1) bound to the enhancer A element; MEIS2 is not involved in complex DNA-binding. Probably in complex with PBX1, is involved in transcriptional regulation by KLF4. Isoforms Meis2B and Meis2D can bind to a EPHA8 promoter sequence containing the DNA motif 5'-CGGTCA-3'; in cooperation with a PBX protein (such as PBX2) is proposed to be involved in the transcriptional activation of EPHA8 in the developing midbrain. May be involved in regulation of myeloid differentiation. Can bind to the DNA sequence 5'-TGACAG-3'in the activator ACT sequence of the D(1A) dopamine receptor (DRD1) promoter and activate DRD1 transcription. This chain is Homeobox protein Meis2 (Meis2), found in Mus musculus (Mouse).